The following is a 429-amino-acid chain: Apolipoprotein A-IV (429 aa).

The first 20 residues, 1-20, serve as a signal peptide directing secretion; sequence MFLKAVVLTLALVAVTGARA. Repeat copies occupy residues 33 to 54, 60 to 81, 82 to 103, 115 to 136, 137 to 158, 159 to 180, 181 to 202, 203 to 224, 225 to 246, 247 to 268, 269 to 286, 287 to 308, and 309 to 330. The tract at residues 33 to 330 is 13 X 22 AA approximate tandem repeats; the sequence is DYFSQLSSNA…QMEQLRQKLG (298 aa). The tract at residues 359–429 is disordered; it reads KEKESQDNTL…QVQMLAPLES (71 aa). A compositionally biased stretch (low complexity) spans 381 to 420; that stretch reads QEQQQEQEQEQQQQQEQQQQQEQQREQQQQEQQQEQQQEQ.

It belongs to the apolipoprotein A1/A4/E family. In terms of assembly, homodimer. Post-translationally, phosphorylation sites are present in the extracellular medium. In terms of tissue distribution, secreted in plasma.

The protein resides in the secreted. Its function is as follows. May have a role in chylomicrons and VLDL secretion and catabolism. Required for efficient activation of lipoprotein lipase by ApoC-II; potent activator of LCAT. Apoa-IV is a major component of HDL and chylomicrons. This Macaca fascicularis (Crab-eating macaque) protein is Apolipoprotein A-IV (APOA4).